A 91-amino-acid chain; its full sequence is DNA-directed RNA polymerase subunit Rpo5 (91 aa).

The protein belongs to the archaeal Rpo5/eukaryotic RPB5 RNA polymerase subunit family. In terms of assembly, part of the RNA polymerase complex.

It localises to the cytoplasm. The enzyme catalyses RNA(n) + a ribonucleoside 5'-triphosphate = RNA(n+1) + diphosphate. Functionally, DNA-dependent RNA polymerase (RNAP) catalyzes the transcription of DNA into RNA using the four ribonucleoside triphosphates as substrates. This Staphylothermus marinus (strain ATCC 43588 / DSM 3639 / JCM 9404 / F1) protein is DNA-directed RNA polymerase subunit Rpo5.